Reading from the N-terminus, the 4903-residue chain is Histone-lysine N-methyltransferase 2C (4903 aa).

Disordered regions lie at residues 1 to 116 and 159 to 202; these read MSSE…SEES and LTLP…PPQQ. Residues 13 to 28 are compositionally biased toward pro residues; sequence QPPPAPPEEPGAPAPS. S28 and S46 each carry phosphoserine. A DNA-binding region (a.T hook) is located at residues 34–46; that stretch reads KRPRGRPRKDGAS. The span at 50–59 shows a compositional bias: basic residues; that stretch reads RARKKPRSRG. Residues 64–81 show a composition bias toward acidic residues; that stretch reads EDEDSMDGLETTETENIV. Residues S89 and S113 each carry the phosphoserine modification. Positions 101–116 are enriched in polar residues; that stretch reads SKQPVSALQRSVSEES. A C2HC pre-PHD-type 1; degenerate zinc finger spans residues 226–261; the sequence is ELSLVGLPDAIDVQALFDSTGTCWAHHRCVEWSLGI. 4 consecutive PHD-type zinc fingers follow at residues 282 to 330, 340 to 390, 387 to 437, and 463 to 519; these read ERCA…PEHI, DANC…CKVC, CKVC…CRIC, and DNLC…CKHL. Residues 343–388 form an RING-type zinc finger; that stretch reads CAVCDSPGDLLDQFFCTTCGQHYHGMCLDIAVTPLKRAGWQCPECK. Residues 435–488 enclose the DHHC domain; the sequence is RICIECGTRSSTQWHHNCLICDTCYQQQDNLCPFCGKCYHPELQKDMLHCNMCK. Residues 671–703 are disordered; that stretch reads SEVASKELSPPKSAPETAAPEALLSPHSERSLS. K751 carries the N6-acetyllysine modification. Basic residues predominate over residues 824 to 835; that stretch reads TKRKFSPGRPRS. Disordered stretches follow at residues 824–857 and 882–904; these read TKRK…DTSE and GFPG…GRSK. The segment covering 838–848 has biased composition (polar residues); sequence GAWSNHNTVSP. The residue at position 847 (S847) is a Phosphoserine. PHD-type zinc fingers lie at residues 950-1003, 1000-1050, and 1077-1132; these read QDMC…CTVC, CTVC…CVWC, and LSSC…CRPY. The disordered stretch occupies residues 1208 to 1318; sequence AVLQTPPDIQ…PSRDDGWREQ (111 aa). Basic and acidic residues predominate over residues 1217–1263; sequence QSEHSRDGEMDDSREGELMDCDGKSESSPEREAGDDETKGIEGTDAI. Residue S1294 is modified to Phosphoserine. The segment covering 1309-1318 has biased composition (basic and acidic residues); it reads PSRDDGWREQ. A coiled-coil region spans residues 1330-1352; sequence VAENTDKIKKRYRKRKNKLEETF. Disordered stretches follow at residues 1397–1419 and 1447–1473; these read SDPL…ADDP and HSDI…RPLT. Composition is skewed to polar residues over residues 1406–1415 and 1455–1471; these read TSAKPGTQGT and ADAS…SSRP. Residue K1497 is modified to N6-acetyllysine. Disordered stretches follow at residues 1594–1617 and 1698–1757; these read NAIA…ENDT and VQMS…AKIE. Polar residues predominate over residues 1599–1617; sequence DPNSSWAPTTPSMEGENDT. The span at 1707–1717 shows a compositional bias: low complexity; it reads RQQQQDSIDPS. Residues 1718–1742 show a composition bias toward basic and acidic residues; that stretch reads SRIDSDLFKDPLKQRESEHEQEWKF. Positions 1743–1790 form a coiled coil; the sequence is RQQMRQKSKQQAKIEATQKLEQVKNEQQQQQQQQQQQQQQQLASQHLL. Residue K1761 is modified to N6-acetyllysine. The interval 1791-2375 is disordered; it reads VAPGSDTPSS…MSQADTEKLR (585 aa). A compositionally biased stretch (polar residues) spans 1796–1819; it reads DTPSSGAQSPLTPQAGNGNVSPAQ. Residues 1855-1886 are compositionally biased toward low complexity; the sequence is PSRIPVQESLSQSQNSQPPSPQMFSPGSSHSR. Position 1983 is a phosphoserine (S1983). Residues 1986-2001 are compositionally biased toward polar residues; that stretch reads ISEQSTKGPLTTGTSD. K2005 is subject to N6-acetyllysine. Polar residues-rich tracts occupy residues 2113–2124, 2137–2151, and 2325–2334; these read GTISRSASQDPY, SYSQ…NPDP, and GNFSTSSNLP. Over residues 2335-2347 the composition is skewed to low complexity; it reads VSSQGQQFSSVSQ. Residues 2355–2369 are compositionally biased toward polar residues; the sequence is SGGTDTQNTVNMSQA. Asymmetric dimethylarginine occurs at positions 2447 and 2563. 3 disordered regions span residues 2561–2668, 2702–2736, and 2786–2844; these read RSRL…DNLE, KDLD…NDPN, and VEPK…GDAD. 3 stretches are compositionally biased toward polar residues: residues 2602–2611, 2621–2636, and 2653–2668; these read QPSQCLSNQL, PPSQ…QSSI, and PLST…DNLE. Residues 2788–2807 are compositionally biased toward basic and acidic residues; that stretch reads PKTRDQGDKTMVLEDKDLPQ. Residues K2796 and K2803 each carry the N6-acetyllysine modification. S2822 carries the phosphoserine modification. At Y2824 the chain carries Phosphotyrosine. Residues 2825–2843 are compositionally biased toward basic and acidic residues; that stretch reads SKEEIQSEIKNHDDSRGDA. N6-acetyllysine occurs at positions 2826 and 2862. A disordered region spans residues 2920-2953; sequence EKCDDSDIRPSGSSPPSLPISPSTHGSSLPPTLI. The segment covering 2929-2942 has biased composition (low complexity); that stretch reads PSGSSPPSLPISPS. 2 coiled-coil regions span residues 3047 to 3074 and 3166 to 3193; these read LLQD…QRSE and NDSQ…YLEE. Residues 3198 to 3214 show a composition bias toward basic residues; that stretch reads HRKSKKALSAKQRTAKK. The tract at residues 3198-3223 is disordered; that stretch reads HRKSKKALSAKQRTAKKAGREFPEED. 2 coiled-coil regions span residues 3224–3270 and 3387–3432; these read AEQL…QQCA and FSES…QHCL. Disordered stretches follow at residues 3329 to 3407 and 3444 to 3910; these read PGWQ…QERQ and SQMP…QKMA. Residues 3391–3407 are compositionally biased toward basic and acidic residues; that stretch reads FQERERKERLREQQERQ. Over residues 3464 to 3485 the composition is skewed to low complexity; that stretch reads LQQSPQHQQQIGPVLQQQNVQQ. Composition is skewed to polar residues over residues 3486–3503, 3515–3524, 3557–3586, and 3632–3647; these read GSVN…NEQR, PSASGGSPNF, PVAN…SLIQ, and LSET…PSEL. Composition is skewed to basic and acidic residues over residues 3697 to 3739 and 3795 to 3804; these read AEAD…KIKD and SSTKDGKLIE. At K3709 the chain carries N6-acetyllysine. The segment covering 3871 to 3885 has biased composition (polar residues); it reads MYSSSDSFTHLKQQN. The span at 3890–3904 shows a compositional bias: pro residues; sequence PPTPPASLPPTPPPM. At S4027 the chain carries Phosphoserine. The residue at position 4132 (R4132) is an Asymmetric dimethylarginine. The disordered stretch occupies residues 4159 to 4184; sequence PNVPFPPTSNGLSGYKDSSHGPAEGA. Phosphoserine is present on S4260. A C2HC pre-PHD-type 2 zinc finger spans residues 4391–4431; sequence CRKCCFCHEEGDGLTDGPARLLNLDLDLWVHLNCALWSTEV. The PHD-type 8 zinc-finger motif lies at 4452-4499; it reads MKCVFCHKTGATSGCHRFRCTNIYHFTCATKAQCMFFKDKTMLCPMHK. One can recognise an FYR N-terminal domain in the interval 4537 to 4597; it reads DHTFRVGSLI…CRYLCSIEEK (61 aa). In terms of domain architecture, FYR C-terminal spans 4598–4683; the sequence is DGRPVFVIRI…EACENYTFRY (86 aa). A WDR5 interaction motif (WIN) motif is present at residues 4699-4704; the sequence is GCARSE. One can recognise an SET domain in the interval 4763–4879; that stretch reads SNVYLARSRI…KGEELCYDYK (117 aa). Residues Y4817 and 4840–4841 each bind S-adenosyl-L-methionine; that span reads NH. 4 residues coordinate Zn(2+): C4843, C4891, C4893, and C4898. Residues 4887-4903 form the Post-SET domain; it reads HKIPCHCGAVNCRKWMN.

The protein belongs to the class V-like SAM-binding methyltransferase superfamily. Histone-lysine methyltransferase family. TRX/MLL subfamily. Component of the MLL3 complex (also named ASCOM complex), at least composed of catalytic subunit KMT2C/MLL3, ASH2L, RBBP5, WDR5, NCOA6, DPY30, KDM6A, PAXIP1/PTIP, PAGR1 and alpha- and beta-tubulin. Forms a core complex with the evolutionary conserved subcomplex WRAD composed of WDR5, RBBP5, ASH2L/ASH2 and DPY30 subunits; WRAD differentially stimulates the methyltransferase activity. Interacts (via WIN motif) with WDR5. In adult, detected in testis, kidney, spleen and lung, weakly expressed in brain and absent in heart and liver. First detected throughout the embryo at 8 dpc when expression is strong in forebrain neuroepithelium and absent in heart. Expressed in the eye lens between 10 and 14.5 dpc. By 13 dpc, expressed strongly in spinal cord, hand/foot plates and gonads.

Its subcellular location is the nucleus. The catalysed reaction is L-lysyl(4)-[histone H3] + S-adenosyl-L-methionine = N(6)-methyl-L-lysyl(4)-[histone H3] + S-adenosyl-L-homocysteine + H(+). Its function is as follows. Histone methyltransferase that catalyzes methyl group transfer from S-adenosyl-L-methionine to the epsilon-amino group of 'Lys-4' of histone H3 (H3K4). Part of chromatin remodeling machinery predominantly forms H3K4me1 methylation marks at active chromatin sites where transcription and DNA repair take place. Likely plays a redundant role with KMT2D in enriching H3K4me1 mark on primed and active enhancer elements. The sequence is that of Histone-lysine N-methyltransferase 2C (Kmt2c) from Mus musculus (Mouse).